A 335-amino-acid chain; its full sequence is Holliday junction branch migration complex subunit RuvB (335 aa).

The segment at 4-184 is large ATPase domain (RuvB-L); the sequence is ADRIISGQAK…FGIVQRLEFY (181 aa). ATP contacts are provided by residues isoleucine 23, arginine 24, glycine 65, lysine 68, threonine 69, threonine 70, 131–133, arginine 174, tyrosine 184, and arginine 221; that span reads EDY. Mg(2+) is bound at residue threonine 69. The segment at 185–255 is small ATPAse domain (RuvB-S); it reads SVEDLTSIVA…VAKQALSMLD (71 aa). Residues 258–335 form a head domain (RuvB-H) region; that stretch reads DAGFDYLDRK…RHFGLQKLSD (78 aa). Positions 294, 313, and 318 each coordinate DNA.

It belongs to the RuvB family. As to quaternary structure, homohexamer. Forms an RuvA(8)-RuvB(12)-Holliday junction (HJ) complex. HJ DNA is sandwiched between 2 RuvA tetramers; dsDNA enters through RuvA and exits via RuvB. An RuvB hexamer assembles on each DNA strand where it exits the tetramer. Each RuvB hexamer is contacted by two RuvA subunits (via domain III) on 2 adjacent RuvB subunits; this complex drives branch migration. In the full resolvosome a probable DNA-RuvA(4)-RuvB(12)-RuvC(2) complex forms which resolves the HJ.

The protein resides in the cytoplasm. It carries out the reaction ATP + H2O = ADP + phosphate + H(+). Functionally, the RuvA-RuvB-RuvC complex processes Holliday junction (HJ) DNA during genetic recombination and DNA repair, while the RuvA-RuvB complex plays an important role in the rescue of blocked DNA replication forks via replication fork reversal (RFR). RuvA specifically binds to HJ cruciform DNA, conferring on it an open structure. The RuvB hexamer acts as an ATP-dependent pump, pulling dsDNA into and through the RuvAB complex. RuvB forms 2 homohexamers on either side of HJ DNA bound by 1 or 2 RuvA tetramers; 4 subunits per hexamer contact DNA at a time. Coordinated motions by a converter formed by DNA-disengaged RuvB subunits stimulates ATP hydrolysis and nucleotide exchange. Immobilization of the converter enables RuvB to convert the ATP-contained energy into a lever motion, pulling 2 nucleotides of DNA out of the RuvA tetramer per ATP hydrolyzed, thus driving DNA branch migration. The RuvB motors rotate together with the DNA substrate, which together with the progressing nucleotide cycle form the mechanistic basis for DNA recombination by continuous HJ branch migration. Branch migration allows RuvC to scan DNA until it finds its consensus sequence, where it cleaves and resolves cruciform DNA. The polypeptide is Holliday junction branch migration complex subunit RuvB (Haemophilus influenzae (strain PittEE)).